Here is a 480-residue protein sequence, read N- to C-terminus: Aspartyl/glutamyl-tRNA(Asn/Gln) amidotransferase subunit B (480 aa).

The protein belongs to the GatB/GatE family. GatB subfamily. As to quaternary structure, heterotrimer of A, B and C subunits.

It catalyses the reaction L-glutamyl-tRNA(Gln) + L-glutamine + ATP + H2O = L-glutaminyl-tRNA(Gln) + L-glutamate + ADP + phosphate + H(+). The enzyme catalyses L-aspartyl-tRNA(Asn) + L-glutamine + ATP + H2O = L-asparaginyl-tRNA(Asn) + L-glutamate + ADP + phosphate + 2 H(+). Functionally, allows the formation of correctly charged Asn-tRNA(Asn) or Gln-tRNA(Gln) through the transamidation of misacylated Asp-tRNA(Asn) or Glu-tRNA(Gln) in organisms which lack either or both of asparaginyl-tRNA or glutaminyl-tRNA synthetases. The reaction takes place in the presence of glutamine and ATP through an activated phospho-Asp-tRNA(Asn) or phospho-Glu-tRNA(Gln). The sequence is that of Aspartyl/glutamyl-tRNA(Asn/Gln) amidotransferase subunit B from Streptococcus pneumoniae (strain Hungary19A-6).